Reading from the N-terminus, the 298-residue chain is (S)-ureidoglycine aminohydrolase (298 aa).

An N-terminal signal peptide occupies residues 1 to 20 (MRSLYLIVFIVISLVKASKS). One can recognise a Cupin type-2 domain in the interval 222-288 (TMDFQPGEFL…ALGKTRSRYL (67 aa)). Mn(2+) is bound by residues glutamate 235, histidine 237, histidine 241, and glutamine 275. Glutamate 235 is a substrate binding site. 3 residues coordinate substrate: glutamine 275, tyrosine 287, and lysine 291.

The protein belongs to the UGHY family. As to quaternary structure, homooctamer. Mn(2+) serves as cofactor.

Its subcellular location is the endoplasmic reticulum. The catalysed reaction is (S)-2-ureidoglycine + H2O = (S)-ureidoglycolate + NH4(+). Its function is as follows. Involved in the catabolism of purine nucleotides. Can use (S)-2-ureidoglycine as substrate, but not allantoate. The sequential activity of AAH, UGLYAH and UAH allows a complete purine breakdown without the intermediate generation of urea. This Arabidopsis thaliana (Mouse-ear cress) protein is (S)-ureidoglycine aminohydrolase (UGLYAH).